A 261-amino-acid chain; its full sequence is Sugar fermentation stimulation protein homolog (261 aa).

The disordered stretch occupies residues 1-23 (MTDSAKPQNPDPGHESRRVAPLA).

This sequence belongs to the SfsA family.

The sequence is that of Sugar fermentation stimulation protein homolog from Syntrophobacter fumaroxidans (strain DSM 10017 / MPOB).